The sequence spans 182 residues: Large ribosomal subunit protein uL6 (182 aa).

The protein belongs to the universal ribosomal protein uL6 family. Part of the 50S ribosomal subunit.

Functionally, this protein binds to the 23S rRNA, and is important in its secondary structure. It is located near the subunit interface in the base of the L7/L12 stalk, and near the tRNA binding site of the peptidyltransferase center. The polypeptide is Large ribosomal subunit protein uL6 (Methanocaldococcus jannaschii (strain ATCC 43067 / DSM 2661 / JAL-1 / JCM 10045 / NBRC 100440) (Methanococcus jannaschii)).